The primary structure comprises 141 residues: Putative pre-16S rRNA nuclease (141 aa).

The protein belongs to the YqgF nuclease family.

Its subcellular location is the cytoplasm. Functionally, could be a nuclease involved in processing of the 5'-end of pre-16S rRNA. This Dictyoglomus turgidum (strain DSM 6724 / Z-1310) protein is Putative pre-16S rRNA nuclease.